The chain runs to 519 residues: MKKLKLNYLLIGVVTLLLAVALWPAIPWSGKADNRIAAIQARGVLRVSTIATPLTMYRAGDTMSGLDYELSQAFADYLGVKLKITVRQNISQLFDDLDNNDADLLAAGLVYNEARSQHYQAGPIYYSVSQQMVYRVGSLRPRSLASIKEGQLTIAPGHVAQSELEQLKASKYPDLTWRVDPKLSSNELMLQVAQGTLDYTIADSVAISLFQRVHPQLAVALDLSDEQPVTWFSRRSSDNSLSAALLDFFNQINEDGTLARLEEKYLGHGNDFDYVDTRSFLRAVDSVLPELQPLFEKYATDIDWRLLAAISYQESHWDSQATSPTGVRGLMMLTRNTAQSLGLTDRLDAEQSISGGARYLKDMMSKVPESVPEEERIWFALAAYNMGYAHMLDARALTAKQKGNPDSWSDVKQRLPLLSQRPYYSKLTYGYARGHEAYAYVENIRKYQISLVGYLLEKEKQAAAAAQPKLVQSYPTNITPQGLFPSPFSSLPLGPFSQAGAGGKTHSALPNTLSPVSPR.

Residues 1-32 (MKKLKLNYLLIGVVTLLLAVALWPAIPWSGKA) form the signal peptide. Positions 33–269 (DNRIAAIQAR…RLEEKYLGHG (237 aa)) are non-LT domain. The tract at residues 270–519 (NDFDYVDTRS…PNTLSPVSPR (250 aa)) is LT domain. The active site involves E314. The interval 495–519 (PFSQAGAGGKTHSALPNTLSPVSPR) is disordered. Residues 508 to 519 (ALPNTLSPVSPR) show a composition bias toward polar residues.

The protein in the N-terminal section; belongs to the bacterial solute-binding protein 3 family. This sequence in the C-terminal section; belongs to the transglycosylase Slt family.

Its subcellular location is the cell outer membrane. It carries out the reaction Exolytic cleavage of the (1-&gt;4)-beta-glycosidic linkage between N-acetylmuramic acid (MurNAc) and N-acetylglucosamine (GlcNAc) residues in peptidoglycan, from either the reducing or the non-reducing ends of the peptidoglycan chains, with concomitant formation of a 1,6-anhydrobond in the MurNAc residue.. Its function is as follows. Murein-degrading enzyme that degrades murein glycan strands and insoluble, high-molecular weight murein sacculi, with the concomitant formation of a 1,6-anhydromuramoyl product. Lytic transglycosylases (LTs) play an integral role in the metabolism of the peptidoglycan (PG) sacculus. Their lytic action creates space within the PG sacculus to allow for its expansion as well as for the insertion of various structures such as secretion systems and flagella. The protein is Membrane-bound lytic murein transglycosylase F of Cronobacter sakazakii (strain ATCC BAA-894) (Enterobacter sakazakii).